The following is a 642-amino-acid chain: Phosphomethylpyrimidine synthase (642 aa).

Substrate is bound by residues Asn235, Met264, Tyr293, His329, 349–351 (SRG), 390–393 (DGLR), and Glu429. His433 lines the Zn(2+) pocket. Tyr456 provides a ligand contact to substrate. His497 serves as a coordination point for Zn(2+). [4Fe-4S] cluster is bound by residues Cys577, Cys580, and Cys585.

Belongs to the ThiC family. As to quaternary structure, homodimer. Requires [4Fe-4S] cluster as cofactor.

It carries out the reaction 5-amino-1-(5-phospho-beta-D-ribosyl)imidazole + S-adenosyl-L-methionine = 4-amino-2-methyl-5-(phosphooxymethyl)pyrimidine + CO + 5'-deoxyadenosine + formate + L-methionine + 3 H(+). Its pathway is cofactor biosynthesis; thiamine diphosphate biosynthesis. Functionally, catalyzes the synthesis of the hydroxymethylpyrimidine phosphate (HMP-P) moiety of thiamine from aminoimidazole ribotide (AIR) in a radical S-adenosyl-L-methionine (SAM)-dependent reaction. This Alteromonas mediterranea (strain DSM 17117 / CIP 110805 / LMG 28347 / Deep ecotype) protein is Phosphomethylpyrimidine synthase.